The primary structure comprises 89 residues: Protein WFDC9 (89 aa).

The first 23 residues, 1–23 (MKPWILLLVMFISGVVMLLPVLG), serve as a signal peptide directing secretion.

The protein localises to the secreted. The sequence is that of Protein WFDC9 (WFDC9) from Homo sapiens (Human).